A 596-amino-acid polypeptide reads, in one-letter code: Probable protein S-acyltransferase 22 (596 aa).

2 helical membrane passes run 15-35 and 44-64; these read VVAV…FAPF and IAMG…IWCA. The segment at 102-125 is disordered; the sequence is TGGAKSHDGTCVEDTENGSNKKLE. In terms of domain architecture, DHHC spans 163–213; it reads FYCSLCEVEVFKYSKHCRVCDKCVDRFDHHCRWLNNCIGKRNYRKFFSLMV. The active-site S-palmitoyl cysteine intermediate is the Cys-193. A run of 2 helical transmembrane segments spans residues 215–235 and 254–274; these read AIFL…LCLL and LIPF…ATLP. Disordered regions lie at residues 433-455, 498-523, and 549-596; these read SGRR…RRQS, QTSR…DSHD, and MGQQ…HKSR. Residues 498-518 show a composition bias toward polar residues; the sequence is QTSRAMSGSGNVMVTSSPESS. The segment covering 549-571 has biased composition (low complexity); that stretch reads MGQQRGQQQQQQLSMMMMPLSRS.

Belongs to the DHHC palmitoyltransferase family.

It localises to the cell membrane. Its subcellular location is the cytoplasmic vesicle membrane. It carries out the reaction L-cysteinyl-[protein] + hexadecanoyl-CoA = S-hexadecanoyl-L-cysteinyl-[protein] + CoA. Its function is as follows. Palmitoyl acyltransferase. This Arabidopsis thaliana (Mouse-ear cress) protein is Probable protein S-acyltransferase 22 (PAT22).